Reading from the N-terminus, the 469-residue chain is Ribulose bisphosphate carboxylase large chain (469 aa).

The propeptide occupies 1–2; that stretch reads MS. Pro-3 carries the N-acetylproline modification. Lys-14 carries the post-translational modification N6,N6,N6-trimethyllysine. Asn-123 and Thr-173 together coordinate substrate. The active-site Proton acceptor is the Lys-175. Lys-177 contributes to the substrate binding site. Mg(2+) is bound by residues Lys-201, Asp-203, and Glu-204. Lys-201 bears the N6-carboxylysine mark. The active-site Proton acceptor is the His-294. Substrate is bound by residues Arg-295, His-327, and Ser-379.

The protein belongs to the RuBisCO large chain family. Type I subfamily. As to quaternary structure, heterohexadecamer of 8 large chains and 8 small chains; disulfide-linked. The disulfide link is formed within the large subunit homodimers. Mg(2+) serves as cofactor. The disulfide bond which can form in the large chain dimeric partners within the hexadecamer appears to be associated with oxidative stress and protein turnover.

The protein localises to the plastid. The protein resides in the chloroplast. The catalysed reaction is 2 (2R)-3-phosphoglycerate + 2 H(+) = D-ribulose 1,5-bisphosphate + CO2 + H2O. The enzyme catalyses D-ribulose 1,5-bisphosphate + O2 = 2-phosphoglycolate + (2R)-3-phosphoglycerate + 2 H(+). Its function is as follows. RuBisCO catalyzes two reactions: the carboxylation of D-ribulose 1,5-bisphosphate, the primary event in carbon dioxide fixation, as well as the oxidative fragmentation of the pentose substrate in the photorespiration process. Both reactions occur simultaneously and in competition at the same active site. This chain is Ribulose bisphosphate carboxylase large chain, found in Brexia madagascariensis.